The sequence spans 212 residues: Pyrrolidone-carboxylate peptidase (212 aa).

Active-site residues include E78, C141, and H165.

This sequence belongs to the peptidase C15 family. Homotetramer.

The protein resides in the cytoplasm. It catalyses the reaction Release of an N-terminal pyroglutamyl group from a polypeptide, the second amino acid generally not being Pro.. Removes 5-oxoproline from various penultimate amino acid residues except L-proline. This Staphylococcus aureus (strain NCTC 8325 / PS 47) protein is Pyrrolidone-carboxylate peptidase.